The chain runs to 523 residues: Cytochrome P450 52A3-A (523 aa).

A helical membrane pass occupies residues tryptophan 17–leucine 34. Heme is bound at residue cysteine 471.

Belongs to the cytochrome P450 family. It depends on heme as a cofactor.

It localises to the membrane. Its function is as follows. Together with an NADPH cytochrome P450 the enzyme system catalyzes the terminal hydroxylation as the first step in the assimilation of alkanes and fatty acids. The polypeptide is Cytochrome P450 52A3-A (CYP52A3-A) (Candida maltosa (Yeast)).